A 116-amino-acid chain; its full sequence is Large ribosomal subunit protein bL17 (116 aa).

Belongs to the bacterial ribosomal protein bL17 family. Part of the 50S ribosomal subunit. Contacts protein L32.

The protein is Large ribosomal subunit protein bL17 of Synechococcus sp. (strain RCC307).